Consider the following 699-residue polypeptide: MNTILVTTSRGLDELLKQEVLTLCPDAQIKQGPGTIQFEGSKEDAYKLCLWSRLANRVIWVLASGKAGDAEALYNTAMGIDWQMQMDSRHTLSVQFIGTNFAIKNTQFGAVRVKDAIVDSFVEQGLPRPSVERKTPDISVYARLHRDNVILGIDLAGASLHQRAYRQETGDAPLKEHIASAMLMRSGWTENTDAPLVDLMCGSGTIAIEAAYIARNIAPGIKRSYWGFTKWLGHEATLWDSLLEDAISVQKPSCGGGIYAGDFSRKMVAIAKANADFAGVFNDISFSQQDATKSSPPVATPGYVVSNPPYGERLGELTSLIPLFSDWGKRFKEAWKGWHVSLLSSNRDLLRVLKLRATKDYAMNNGKLECRLANYVLDEQNTVQFSEDAGNHEFANRLKKNLKRMKGWVKSANTNCYRIYDADLPDYNVAVDRYGDWLVVQEYAPPKTVSEDKARKRLQEVLLHLPAVTGVSPKNIALKVRAQQKGSKQYEKINQSGEMMEVFENGARFLVNLTDYLDTGLFLDHRNTRQKVKALSQGKDVLNLFSYTGSVSVFAAMGGAKSVTTVDMSNTYLDWAKKNVALNKLSGPHAFIQADCTTWLGTHKGKYDLIFIDPPSFSNSKRMQNTWDVQRDHVKMLTDAKACLKEQGTIIFSNNKRGFKLDETAVTALGLQVENITKETIPEDFARKGKIHQCWVLRS.

One can recognise a THUMP domain in the interval 44 to 155; it reads DAYKLCLWSR…RDNVILGIDL (112 aa).

It belongs to the methyltransferase superfamily. RlmKL family.

It is found in the cytoplasm. The enzyme catalyses guanosine(2445) in 23S rRNA + S-adenosyl-L-methionine = N(2)-methylguanosine(2445) in 23S rRNA + S-adenosyl-L-homocysteine + H(+). It carries out the reaction guanosine(2069) in 23S rRNA + S-adenosyl-L-methionine = N(2)-methylguanosine(2069) in 23S rRNA + S-adenosyl-L-homocysteine + H(+). Specifically methylates the guanine in position 2445 (m2G2445) and the guanine in position 2069 (m7G2069) of 23S rRNA. In Alteromonas mediterranea (strain DSM 17117 / CIP 110805 / LMG 28347 / Deep ecotype), this protein is Ribosomal RNA large subunit methyltransferase K/L.